Reading from the N-terminus, the 1218-residue chain is Protein STICHEL (1218 aa).

Residues 24–136 are disordered; that stretch reads AGRVLRDPGT…SDARNGGDSY (113 aa). 3 stretches are compositionally biased toward polar residues: residues 32–46, 54–73, and 86–95; these read GTTSSWKSPLDSSRS, ASRNGGSSSQFPIRGESSTN, and WKTQKSSSEK. A Bipartite nuclear localization signal motif is present at residues 163–180; it reads RKSNVGSCKKKSKKKISS. Short sequence motifs (PEST) lie at residues 273–304 and 425–449; these read RNPSTVGSWDGTTTSVNDGDDELDDNLDLPGR and RSQDGLEAVALDGEEEEGSTPETIR. 490 to 497 lines the ATP pocket; sequence GPRGTGKT. Zn(2+)-binding residues include Cys-509, Cys-518, Cys-521, and Cys-524. Positions 762 to 788 form a coiled coil; sequence EADMEGLKHALKLLSEAEKQLRVSNDR. Positions 802–828 are disordered; sequence MPSPGTTHTGSSRRQSSRATDDDPASV. Polar residues predominate over residues 804–819; the sequence is SPGTTHTGSSRRQSSR. 2 short sequence motifs (bipartite nuclear localization signal) span residues 1178–1195 and 1196–1213; these read RRSKSKQVKGTPVRSRRN and RKSRFSLFNGCAKPRKAE.

It belongs to the DnaX/STICHEL family. In terms of assembly, interacts with BLT. In terms of tissue distribution, ubiquitous.

The protein resides in the nucleus. Functionally, acts as a key regulator of trichome branching through an endoreduplication-independent pathway. The polypeptide is Protein STICHEL (STI) (Arabidopsis thaliana (Mouse-ear cress)).